Consider the following 719-residue polypeptide: DNA ligase (719 aa).

NAD(+) is bound by residues aspartate 42 to aspartate 46, serine 91 to leucine 92, and glutamate 125. The active-site N6-AMP-lysine intermediate is lysine 127. NAD(+)-binding residues include arginine 148, glutamate 184, lysine 300, and lysine 324. 4 residues coordinate Zn(2+): cysteine 429, cysteine 432, cysteine 447, and cysteine 453. The region spanning threonine 638–isoleucine 719 is the BRCT domain.

This sequence belongs to the NAD-dependent DNA ligase family. LigA subfamily. Requires Mg(2+) as cofactor. The cofactor is Mn(2+).

It catalyses the reaction NAD(+) + (deoxyribonucleotide)n-3'-hydroxyl + 5'-phospho-(deoxyribonucleotide)m = (deoxyribonucleotide)n+m + AMP + beta-nicotinamide D-nucleotide.. Functionally, DNA ligase that catalyzes the formation of phosphodiester linkages between 5'-phosphoryl and 3'-hydroxyl groups in double-stranded DNA using NAD as a coenzyme and as the energy source for the reaction. It is essential for DNA replication and repair of damaged DNA. This is DNA ligase from Bartonella tribocorum (strain CIP 105476 / IBS 506).